The sequence spans 146 residues: Snaclec echicetin subunit beta (146 aa).

An N-terminal signal peptide occupies residues 1–23 (MGRFISVSFGLLVLLLSLSGTGA). Intrachain disulfides connect C25–C36, C53–C142, and C119–C134. In terms of domain architecture, C-type lectin spans 32-143 (YEGYCYKVFK…CTWTFSFVCK (112 aa)).

This sequence belongs to the snaclec family. Heterodimer of subunits alpha and beta; disulfide-linked. In terms of tissue distribution, expressed by the venom gland.

The protein resides in the secreted. Its function is as follows. Binding of echicetin to glycoprotein Ibalpha (GP1BA) receptor on platelets alone results in inhibition of platelet aggregation, while binding to both GPIba receptor and IgMk promotes platelet aggregation and signal transduction. This chain is Snaclec echicetin subunit beta, found in Echis carinatus (Saw-scaled viper).